Reading from the N-terminus, the 290-residue chain is Glutaredoxin domain-containing cysteine-rich protein 1 (290 aa).

Residues 127 to 234 (LQQPSTDLEF…DILTKIERVQ (108 aa)) form the Glutaredoxin domain.

It belongs to the GRXCR1 family. As to expression, expressed at low levels in adult lung, brain and duodenum with moderate levels in testis. Highly expressed in fetal cochlea.

The protein localises to the cell projection. Its subcellular location is the stereocilium. It is found in the microvillus. It localises to the kinocilium. May play a role in actin filament architecture in developing stereocilia of sensory cells. The chain is Glutaredoxin domain-containing cysteine-rich protein 1 (GRXCR1) from Homo sapiens (Human).